A 307-amino-acid chain; its full sequence is Probable RuBisCO transcriptional regulator (307 aa).

In terms of domain architecture, HTH lysR-type spans 5 to 62 (FTLQQLRIFKAIASEKSFTQAAEILFVSQPSLSKQIKTLENRLGILLLNRTGNKILLT). Positions 22–41 (FTQAAEILFVSQPSLSKQIK) form a DNA-binding region, H-T-H motif.

This sequence belongs to the LysR transcriptional regulatory family.

It localises to the plastid. The protein resides in the chloroplast. In terms of biological role, trans-acting transcriptional regulator of RuBisCO genes (rbcL and rbcS) expression. This is Probable RuBisCO transcriptional regulator (rbcR-A) from Thalassiosira pseudonana (Marine diatom).